The sequence spans 65 residues: Period circadian protein (65 aa).

The disordered stretch occupies residues 1 to 65 (EGSGGSGSSG…VTLTESLLNK (65 aa)). Residues 18 to 28 (VRMSSVTNTSN) show a composition bias toward polar residues. A compositionally biased stretch (low complexity) spans 29–38 (AGTGTSAGDN). Positions 56–65 (VTLTESLLNK) are enriched in polar residues.

As to quaternary structure, forms a heterodimer with timeless (TIM); the complex then translocates into the nucleus. In terms of processing, phosphorylated with a circadian rhythmicity, probably by the double-time protein (dbt). Phosphorylation could be implicated in the stability of per monomer and in the formation of heterodimer per-tim.

Its subcellular location is the nucleus. The protein localises to the cytoplasm. The protein resides in the perinuclear region. In terms of biological role, essential for biological clock functions. Determines the period length of circadian and ultradian rhythms; an increase in PER dosage leads to shortened circadian rhythms and a decrease leads to lengthened circadian rhythms. Essential for the circadian rhythmicity of locomotor activity, eclosion behavior, and for the rhythmic component of the male courtship song that originates in the thoracic nervous system. The biological cycle depends on the rhythmic formation and nuclear localization of the TIM-PER complex. Light induces the degradation of TIM, which promotes elimination of PER. Nuclear activity of the heterodimer coordinatively regulates PER and TIM transcription through a negative feedback loop. Behaves as a negative element in circadian transcriptional loop. Does not appear to bind DNA, suggesting indirect transcriptional inhibition. In Drosophila mojavensis (Fruit fly), this protein is Period circadian protein (per).